A 261-amino-acid chain; its full sequence is Early E1A protein (261 aa).

An interaction with RB1 in competition with E2F1 region spans residues 43–51 (PTLHDLYDL). The interval 78–149 (EGLDINPPPE…VNEGVKAASD (72 aa)) is interaction with UBE2I. The PXLXP motif, interaction with host ZMYND11 signature appears at 106–110 (PDLGA). Positions 115–119 (LRCYE) match the LXCXE motif, interaction with host RB1 and TMEM173/STING motif. A zinc finger spans residues 163–183 (CKSCEFHRNNTGMKELLCSLC). The tract at residues 197–261 (SDDESPSPDS…DLSTRKLPRQ (65 aa)) is disordered. The segment covering 203-212 (SPDSTTSPPE) has biased composition (low complexity). Residues 250–254 (PLDLS) carry the PXDLS motif, CTBP-binding motif. The short motif at 256–261 (RKLPRQ) is the Nuclear localization signal element.

It belongs to the adenoviridae E1A protein family. Interacts with host UBE2I; this interaction interferes with polySUMOylation. Interacts with host RB1; this interaction induces the aberrant dissociation of RB1-E2F1 complex thereby disrupting the activity of RB1 and activating E2F1-regulated genes. Interacts with host ATF7; the interaction enhances ATF7-mediated viral transactivation activity which requires the zinc binding domains of both proteins. Isoform early E1A 32 kDa protein and isoform early E1A 26 kDa protein interact (via N-terminus) with CUL1 and E3 ubiquitin ligase RBX1; these interactions inhibit RBX1-CUL1-dependent elongation reaction of ubiquitin chains and attenuate ubiquitination of SCF(FBXW7) target proteins. Interacts (via PXLXP motif) with host ZMYND11/BS69 (via MYND-type zinc finger); this interaction inhibits E1A mediated transactivation. Interacts with host EP300; this interaction stimulates the acetylation of RB1 by recruiting EP300 and RB1 into a multimeric-protein complex. Interacts with host CTBP1 and CTBP2; this interaction seems to potentiate viral replication. Interacts with host DCAF7. Interacts with host DYRK1A. Interacts with host KPNA4; this interaction allows E1A import into the host nucleus. Interacts with host EP400; this interaction stabilizes MYC. Interacts with host TBP protein; this interaction probably disrupts the TBP-TATA complex. Interacts (via LXCXE motif) with host TMEM173/STING; this interaction impairs the ability of TMEM173/STING to sense cytosolic DNA and promote the production of type I interferon (IFN-alpha and IFN-beta). Interacts (via C-terminus) with host ZBED1/hDREF (via C-terminus); the interaction is direct.

Its subcellular location is the host nucleus. Plays a role in viral genome replication by driving entry of quiescent cells into the cell cycle. Stimulation of progression from G1 to S phase allows the virus to efficiently use the cellular DNA replicating machinery to achieve viral genome replication. E1A protein has both transforming and trans-activating activities. Induces the disassembly of the E2F1 transcription factor from RB1 by direct competition for the same binding site on RB1, with subsequent transcriptional activation of E2F1-regulated S-phase genes and of the E2 region of the adenoviral genome. Release of E2F1 leads to the ARF-mediated inhibition of MDM2 and causes TP53/p53 to accumulate because it is not targeted for degradation by MDM2-mediated ubiquitination anymore. This increase in TP53, in turn, would arrest the cell proliferation and direct its death but this effect is counteracted by the viral protein E1B-55K. Inactivation of the ability of RB1 to arrest the cell cycle is critical for cellular transformation, uncontrolled cellular growth and proliferation induced by viral infection. Interaction with RBX1 and CUL1 inhibits ubiquitination of the proteins targeted by SCF(FBXW7) ubiquitin ligase complex, and may be linked to unregulated host cell proliferation. The tumorigenesis-restraining activity of E1A may be related to the disruption of the host CtBP-CtIP complex through the CtBP binding motif. Interaction with host TMEM173/STING impairs the ability of TMEM173/STING to sense cytosolic DNA and promote the production of type I interferon (IFN-alpha and IFN-beta). Promotes the sumoylation of host ZBED1/hDREF with SUMO1. In Human adenovirus B serotype 7 (HAdV-7), this protein is Early E1A protein.